Consider the following 550-residue polypeptide: Chaperonin GroEL (550 aa).

ATP-binding positions include 30–33 (TLGP), Lys51, 87–91 (DGTTT), Gly414, and Asp494.

It belongs to the chaperonin (HSP60) family. In terms of assembly, forms a cylinder of 14 subunits composed of two heptameric rings stacked back-to-back. Interacts with the co-chaperonin GroES.

It is found in the cytoplasm. It catalyses the reaction ATP + H2O + a folded polypeptide = ADP + phosphate + an unfolded polypeptide.. Its function is as follows. Together with its co-chaperonin GroES, plays an essential role in assisting protein folding. The GroEL-GroES system forms a nano-cage that allows encapsulation of the non-native substrate proteins and provides a physical environment optimized to promote and accelerate protein folding. The protein is Chaperonin GroEL of Buchnera aphidicola subsp. Thelaxes suberi.